A 359-amino-acid polypeptide reads, in one-letter code: Agropine synthesis conjugase (359 aa).

One can recognise an SIS domain in the interval 28–171 (TVAKFGRATA…IGGILNEREN (144 aa)).

The polypeptide is Agropine synthesis conjugase (mas2) (Rhizobium rhizogenes (Agrobacterium rhizogenes)).